We begin with the raw amino-acid sequence, 862 residues long: Probable linoleate 9S-lipoxygenase 5 (862 aa).

Residues 36 to 161 (NDVNASLLDG…KYKSERIFFA (126 aa)) enclose the PLAT domain. The region spanning 164–862 (AYLPGETPEP…GKGIPNSVSI (699 aa)) is the Lipoxygenase domain. 5 residues coordinate Fe cation: H523, H528, H714, N718, and I862.

The protein belongs to the lipoxygenase family. Monomer. Requires Fe cation as cofactor. In terms of tissue distribution, not detected in leaves, stems, flowers, roots, tubers and stolons during normal growth and development.

It is found in the cytoplasm. The enzyme catalyses (9Z,12Z)-octadecadienoate + O2 = (9S)-hydroperoxy-(10E,12Z)-octadecadienoate. Its pathway is lipid metabolism; oxylipin biosynthesis. In terms of biological role, plant lipoxygenases may be involved in a number of diverse aspects of plant physiology including growth and development, pest resistance, and senescence or responses to wounding. May contribute to cell death during the hypersensitive response (HR) by the massive production of free fatty acid hydroperoxides. Catalyzes the hydroperoxidation of lipids containing a cis,cis-1,4-pentadiene structure. The protein is Probable linoleate 9S-lipoxygenase 5 (LOX1.5) of Solanum tuberosum (Potato).